Consider the following 400-residue polypeptide: Nicotinate phosphoribosyltransferase (400 aa).

At histidine 220 the chain carries Phosphohistidine; by autocatalysis.

This sequence belongs to the NAPRTase family. Post-translationally, transiently phosphorylated on a His residue during the reaction cycle. Phosphorylation strongly increases the affinity for substrates and increases the rate of nicotinate D-ribonucleotide production. Dephosphorylation regenerates the low-affinity form of the enzyme, leading to product release.

The catalysed reaction is nicotinate + 5-phospho-alpha-D-ribose 1-diphosphate + ATP + H2O = nicotinate beta-D-ribonucleotide + ADP + phosphate + diphosphate. Its pathway is cofactor biosynthesis; NAD(+) biosynthesis; nicotinate D-ribonucleotide from nicotinate: step 1/1. Catalyzes the synthesis of beta-nicotinate D-ribonucleotide from nicotinate and 5-phospho-D-ribose 1-phosphate at the expense of ATP. This chain is Nicotinate phosphoribosyltransferase, found in Enterobacter sp. (strain 638).